The chain runs to 228 residues: Ribonuclease 3 (228 aa).

Positions 3-132 constitute an RNase III domain; the sequence is IRPLEEHLGI…FLGALYLDQG (130 aa). A Mg(2+)-binding site is contributed by Glu-45. Asp-49 is a catalytic residue. Mg(2+) is bound by residues Asp-118 and Glu-121. The active site involves Glu-121. The DRBM domain maps to 158–227; it reads DYKSQLQEFV…AKNALDSINN (70 aa). The segment at 205–228 is disordered; that stretch reads GTGRTKKEAEQRAAKNALDSINNS.

Belongs to the ribonuclease III family. In terms of assembly, homodimer. The cofactor is Mg(2+).

It localises to the cytoplasm. The catalysed reaction is Endonucleolytic cleavage to 5'-phosphomonoester.. In terms of biological role, digests double-stranded RNA. Involved in the processing of primary rRNA transcript to yield the immediate precursors to the large and small rRNAs (23S and 16S). Processes some mRNAs, and tRNAs when they are encoded in the rRNA operon. Processes pre-crRNA and tracrRNA of type II CRISPR loci if present in the organism. In Oceanobacillus iheyensis (strain DSM 14371 / CIP 107618 / JCM 11309 / KCTC 3954 / HTE831), this protein is Ribonuclease 3.